The sequence spans 293 residues: ATP synthase gamma chain (293 aa).

The protein belongs to the ATPase gamma chain family. F-type ATPases have 2 components, CF(1) - the catalytic core - and CF(0) - the membrane proton channel. CF(1) has five subunits: alpha(3), beta(3), gamma(1), delta(1), epsilon(1). CF(0) has three main subunits: a, b and c.

It localises to the cell inner membrane. Functionally, produces ATP from ADP in the presence of a proton gradient across the membrane. The gamma chain is believed to be important in regulating ATPase activity and the flow of protons through the CF(0) complex. This chain is ATP synthase gamma chain, found in Nitrosospira multiformis (strain ATCC 25196 / NCIMB 11849 / C 71).